A 213-amino-acid chain; its full sequence is Bcl-2-related ovarian killer protein (213 aa).

Residue Ser-7 is modified to Phosphoserine. An interactions with ITPR1 region spans residues 15–45 (MDAFDRSPTDKELVAQAKALGREYVHARLLR). Glycyl lysine isopeptide (Lys-Gly) (interchain with G-Cter in ubiquitin) cross-links involve residues Lys-25 and Lys-32. The short motif at 32–44 (KALGREYVHARLL) is the BH4 element. The BH3 motif lies at 67–83 (VCTVLLRLGDELEQIRP). Residues 71-79 (LLRLGDELE) form a nuclear export signal region. The BH1 signature appears at 113–132 (HIFSAGITWGKVVSLYSVAA). Residues Lys-160 and Lys-177 each participate in a glycyl lysine isopeptide (Lys-Gly) (interchain with G-Cter in ubiquitin) cross-link. The BH2 signature appears at 165 to 179 (WLRRRGGWTDVLKCV). The chain crosses the membrane as a helical span at residues 190 to 210 (WLVATLCSFGRFLKAAFFLLL).

The protein belongs to the Bcl-2 family. As to quaternary structure, monomer; positively regulates apoptotic process. Homodimer. Heterodimer. Oligomer; promoted by apoptotic stimuli and BH3-only proteins; mediates constitutive activation. Interacts (via BH4 domain) with ITPR1; enhances BOK expression and stabilization; limits apoptosis and prevents ubiquitination and then degradation; protects ITPR1 from proteolysis by CASP3 during apoptosis. Interacts with ITPR2 and ITPR3; binds most strongly to ITPR2, and barely to ITPR3; regulates their expression. Interacts with XPO1; translocates to the cytoplasm. Interacts with BNIP3; promotes oligomerization. In terms of processing, ubiquitinated by AMFR/gp78 E3 ubiquitin ligase complex; mediates degradation by ubiquitin-proteasome pathway in a VCP/p97-dependent manner; prevents from proapoptotic activity; promotes degradation of newly synthesized proteins that are not ITPR1 associated. As to expression, widely expressed. Highly expressed in brain, kidney, and spleen.

Its subcellular location is the mitochondrion membrane. It is found in the endoplasmic reticulum membrane. The protein localises to the mitochondrion inner membrane. The protein resides in the cytoplasm. It localises to the nucleus. Its subcellular location is the mitochondrion. It is found in the endoplasmic reticulum. The protein localises to the mitochondrion outer membrane. The protein resides in the early endosome membrane. It localises to the recycling endosome membrane. Its subcellular location is the nucleus outer membrane. It is found in the golgi apparatus. The protein localises to the cis-Golgi network membrane. The protein resides in the trans-Golgi network membrane. It localises to the membrane. Its function is as follows. Apoptosis regulator that functions through different apoptotic signaling pathways. Plays a roles as pro-apoptotic protein that positively regulates intrinsic apoptotic process in a BAX- and BAK1-dependent manner or in a BAX- and BAK1-independent manner. In response to endoplasmic reticulum stress promotes mitochondrial apoptosis through downstream BAX/BAK1 activation and positive regulation of PERK-mediated unfolded protein response. Activates apoptosis independently of heterodimerization with survival-promoting BCL2 and BCL2L1 through induction of mitochondrial outer membrane permeabilization, in a BAX- and BAK1-independent manner, in response to inhibition of ERAD-proteasome degradation system, resulting in cytochrome c release. In response to DNA damage, mediates intrinsic apoptotic process in a TP53-dependent manner. Plays a role in granulosa cell apoptosis by CASP3 activation. Plays a roles as anti-apoptotic protein during neuronal apoptotic process, by negatively regulating poly ADP-ribose polymerase-dependent cell death through regulation of neuronal calcium homeostasis and mitochondrial bioenergetics in response to NMDA excitation. In addition to its role in apoptosis, may regulate trophoblast cell proliferation during the early stages of placental development, by acting on G1/S transition through regulation of CCNE1 expression. May also play a role as an inducer of autophagy by disrupting interaction between MCL1 and BECN1. The chain is Bcl-2-related ovarian killer protein from Mus musculus (Mouse).